A 556-amino-acid polypeptide reads, in one-letter code: 2-succinyl-5-enolpyruvyl-6-hydroxy-3-cyclohexene-1-carboxylate synthase (556 aa).

Belongs to the TPP enzyme family. MenD subfamily. As to quaternary structure, homodimer. The cofactor is Mg(2+). Mn(2+) is required as a cofactor. Requires thiamine diphosphate as cofactor.

It catalyses the reaction isochorismate + 2-oxoglutarate + H(+) = 5-enolpyruvoyl-6-hydroxy-2-succinyl-cyclohex-3-ene-1-carboxylate + CO2. It participates in quinol/quinone metabolism; 1,4-dihydroxy-2-naphthoate biosynthesis; 1,4-dihydroxy-2-naphthoate from chorismate: step 2/7. Its pathway is quinol/quinone metabolism; menaquinone biosynthesis. Functionally, catalyzes the thiamine diphosphate-dependent decarboxylation of 2-oxoglutarate and the subsequent addition of the resulting succinic semialdehyde-thiamine pyrophosphate anion to isochorismate to yield 2-succinyl-5-enolpyruvyl-6-hydroxy-3-cyclohexene-1-carboxylate (SEPHCHC). The chain is 2-succinyl-5-enolpyruvyl-6-hydroxy-3-cyclohexene-1-carboxylate synthase from Salmonella heidelberg (strain SL476).